The primary structure comprises 700 residues: AP-1-like transcription factor yap1 (700 aa).

2 disordered regions span residues 17 to 185 (SPGH…KDLE) and 228 to 296 (MPVN…VSLR). A Bipartite nuclear localization signal motif is present at residues 34–41 (MPVPGRDT). The span at 47–59 (PSVSNGSQPSAHQ) shows a compositional bias: polar residues. The Bipartite nuclear localization signal signature appears at 67–74 (SPTPEMPP). Residues 103–112 (LDDDDDDASD) are compositionally biased toward acidic residues. Positions 127 to 138 (AGRAAAASASGS) are enriched in low complexity. The span at 150–185 (GDGKRELSKSERRKEQNRAAQKAFRERREAKVKDLE) shows a compositional bias: basic and acidic residues. One can recognise a bZIP domain in the interval 156-219 (LSKSERRKEQ…KRLQEENVAL (64 aa)). The interval 158–182 (KSERRKEQNRAAQKAFRERREAKVK) is basic motif. The segment at 184 to 191 (LEDKVAEL) is leucine-zipper. 2 transcription activation regions span residues 213–400 (QEEN…QPDS) and 452–577 (LGAT…GRGN). Positions 231–244 (NSRNSPNSNNGSFS) are enriched in low complexity. The segment covering 280 to 296 (SANTISDNSSESLVSLR) has biased composition (polar residues). Residues 306–318 (FSDHFNTYALGVV) form a n-CRD region. 2 disordered regions span residues 320 to 359 (VPPP…PSAD) and 542 to 609 (NYLN…KATT). Low complexity-rich tracts occupy residues 335–358 (SASN…PPSA) and 542–573 (NYLN…NVSS). Residues 589–607 (MGSSRTSVSHDSTDLQGKA) are compositionally biased toward polar residues. A c-CRD region spans residues 642 to 675 (PSELWMRFGMQHENSTEHLLIDDLCDQMRAKATC). The short motif at 660–667 (LLIDDLCD) is the Nuclear export signal element. A disulfide bond links cysteine 666 and cysteine 675.

Belongs to the bZIP family. YAP subfamily. Post-translationally, depending on the oxidative stress inducing agent, yap1 can undergo two distinct conformational changes, both involving disulfide bond formation, and both masking the nuclear export signal, thus abolishing nuclear export.

It localises to the nucleus. The protein localises to the cytoplasm. Its function is as follows. Transcription activator involved in oxidative stress response and redox homeostasis. Regulates the transcription of genes encoding antioxidant enzymes and components of the cellular thiol-reducing pathways. Involved in antifungal resistance to fluconazole. This chain is AP-1-like transcription factor yap1, found in Cryptococcus neoformans var. grubii serotype A (strain H99 / ATCC 208821 / CBS 10515 / FGSC 9487) (Filobasidiella neoformans var. grubii).